A 318-amino-acid chain; its full sequence is Homoserine kinase (318 aa).

Residue P97 to C107 coordinates ATP.

Belongs to the GHMP kinase family. Homoserine kinase subfamily.

It localises to the cytoplasm. The enzyme catalyses L-homoserine + ATP = O-phospho-L-homoserine + ADP + H(+). It functions in the pathway amino-acid biosynthesis; L-threonine biosynthesis; L-threonine from L-aspartate: step 4/5. Its function is as follows. Catalyzes the ATP-dependent phosphorylation of L-homoserine to L-homoserine phosphate. This Vibrio cholerae serotype O1 (strain M66-2) protein is Homoserine kinase.